A 98-amino-acid polypeptide reads, in one-letter code: uncharacterized protein (98 aa).

This is an uncharacterized protein from Thermotoga maritima (strain ATCC 43589 / DSM 3109 / JCM 10099 / NBRC 100826 / MSB8).